The following is a 215-amino-acid chain: FMN-dependent NADH:quinone oxidoreductase (215 aa).

17 to 19 (SAS) serves as a coordination point for FMN.

Belongs to the azoreductase type 1 family. Homodimer. FMN serves as cofactor.

It catalyses the reaction 2 a quinone + NADH + H(+) = 2 a 1,4-benzosemiquinone + NAD(+). The catalysed reaction is N,N-dimethyl-1,4-phenylenediamine + anthranilate + 2 NAD(+) = 2-(4-dimethylaminophenyl)diazenylbenzoate + 2 NADH + 2 H(+). Functionally, quinone reductase that provides resistance to thiol-specific stress caused by electrophilic quinones. In terms of biological role, also exhibits azoreductase activity. Catalyzes the reductive cleavage of the azo bond in aromatic azo compounds to the corresponding amines. This is FMN-dependent NADH:quinone oxidoreductase from Clostridium botulinum (strain Eklund 17B / Type B).